The primary structure comprises 214 residues: Holliday junction branch migration complex subunit RuvA (214 aa).

Residues 1–63 are domain I; it reads MISSLRGTVL…EDSLTLFGFP (63 aa). A domain II region spans residues 64 to 139; it reads GPDELRAFEL…KLFVTQPRAR (76 aa). The segment at 139 to 143 is flexible linker; it reads RSATS. Residues 144-214 are domain III; the sequence is AASTVTADVV…AAPTGQAADR (71 aa).

This sequence belongs to the RuvA family. In terms of assembly, homotetramer. Forms an RuvA(8)-RuvB(12)-Holliday junction (HJ) complex. HJ DNA is sandwiched between 2 RuvA tetramers; dsDNA enters through RuvA and exits via RuvB. An RuvB hexamer assembles on each DNA strand where it exits the tetramer. Each RuvB hexamer is contacted by two RuvA subunits (via domain III) on 2 adjacent RuvB subunits; this complex drives branch migration. In the full resolvosome a probable DNA-RuvA(4)-RuvB(12)-RuvC(2) complex forms which resolves the HJ.

The protein localises to the cytoplasm. The RuvA-RuvB-RuvC complex processes Holliday junction (HJ) DNA during genetic recombination and DNA repair, while the RuvA-RuvB complex plays an important role in the rescue of blocked DNA replication forks via replication fork reversal (RFR). RuvA specifically binds to HJ cruciform DNA, conferring on it an open structure. The RuvB hexamer acts as an ATP-dependent pump, pulling dsDNA into and through the RuvAB complex. HJ branch migration allows RuvC to scan DNA until it finds its consensus sequence, where it cleaves and resolves the cruciform DNA. The chain is Holliday junction branch migration complex subunit RuvA from Clavibacter michiganensis subsp. michiganensis (strain NCPPB 382).